Reading from the N-terminus, the 310-residue chain is 4-diphosphocytidyl-2-C-methyl-D-erythritol kinase (310 aa).

Lysine 10 is an active-site residue. 102 to 112 (PVAGGMAGGSA) serves as a coordination point for ATP. Residue aspartate 144 is part of the active site. A disordered region spans residues 289 to 310 (TRTARGPAAGAQLLPGPVGSFA).

It belongs to the GHMP kinase family. IspE subfamily.

It catalyses the reaction 4-CDP-2-C-methyl-D-erythritol + ATP = 4-CDP-2-C-methyl-D-erythritol 2-phosphate + ADP + H(+). It participates in isoprenoid biosynthesis; isopentenyl diphosphate biosynthesis via DXP pathway; isopentenyl diphosphate from 1-deoxy-D-xylulose 5-phosphate: step 3/6. Functionally, catalyzes the phosphorylation of the position 2 hydroxy group of 4-diphosphocytidyl-2C-methyl-D-erythritol. This is 4-diphosphocytidyl-2-C-methyl-D-erythritol kinase from Cutibacterium acnes (strain DSM 16379 / KPA171202) (Propionibacterium acnes).